The chain runs to 490 residues: uncharacterized protein (490 aa).

The chain crosses the membrane as a helical span at residues 27 to 47 (VYVFLTTIILLLSLISTLIII).

The protein localises to the membrane. This is an uncharacterized protein from Borreliella burgdorferi (strain ATCC 35210 / DSM 4680 / CIP 102532 / B31) (Borrelia burgdorferi).